Here is a 216-residue protein sequence, read N- to C-terminus: LHFPL tetraspan subfamily member 3 protein (216 aa).

4 helical membrane-spanning segments follow: residues 22 to 42 (IGVLWAIFTTLFAIVNVVCFV), 96 to 116 (FFIGMSMVLVLSCIGCFALFF), 126 to 146 (ICGWMQLAAGTCLVLGCMIYP), and 177 to 197 (ILAIMGILDALILSFLAFVLG).

Belongs to the LHFP family.

The protein localises to the membrane. The protein is LHFPL tetraspan subfamily member 3 protein of Danio rerio (Zebrafish).